The sequence spans 323 residues: tRNA U34 carboxymethyltransferase (323 aa).

Carboxy-S-adenosyl-L-methionine contacts are provided by residues Lys-91, Trp-105, Lys-110, Gly-130, Asp-152 to Thr-154, Ile-181 to Glu-182, Met-196, Tyr-200, and Arg-315.

Belongs to the class I-like SAM-binding methyltransferase superfamily. CmoB family. In terms of assembly, homotetramer.

It carries out the reaction carboxy-S-adenosyl-L-methionine + 5-hydroxyuridine(34) in tRNA = 5-carboxymethoxyuridine(34) in tRNA + S-adenosyl-L-homocysteine + H(+). Its function is as follows. Catalyzes carboxymethyl transfer from carboxy-S-adenosyl-L-methionine (Cx-SAM) to 5-hydroxyuridine (ho5U) to form 5-carboxymethoxyuridine (cmo5U) at position 34 in tRNAs. This chain is tRNA U34 carboxymethyltransferase, found in Salmonella gallinarum (strain 287/91 / NCTC 13346).